The sequence spans 353 residues: D-alanine--D-alanine ligase (353 aa).

The 209-residue stretch at 141–349 (KAALAGAGLA…LEQLVHELLE (209 aa)) folds into the ATP-grasp domain. 176-231 (ESGLCYPCFIKPANLGSSVGISKARNREELIHGLRLAATLDPRLVVEQGVQARELE) is an ATP binding site. Residues Asp302, Glu316, and Asn318 each coordinate Mg(2+).

It belongs to the D-alanine--D-alanine ligase family. Mg(2+) is required as a cofactor. The cofactor is Mn(2+).

The protein localises to the cytoplasm. The enzyme catalyses 2 D-alanine + ATP = D-alanyl-D-alanine + ADP + phosphate + H(+). The protein operates within cell wall biogenesis; peptidoglycan biosynthesis. Its function is as follows. Cell wall formation. This is D-alanine--D-alanine ligase from Parasynechococcus marenigrum (strain WH8102).